The chain runs to 236 residues: MTHLAVNVDHIATLRQARGVDYPDPVAGAVLAQLAGAHGIVAHLREDRRHIQDTDVVRLRAAARRFILEMAVTPEMEKIALSVKPDLVTLVPEKRKELTTEGGLNLARHGGPVAKTIETLHRNEIPVSLFIDPDPGQVRRSHDAGAMAVEIHTGAFCEAATEKIRQKEFDRIRKAVEVARNLGLIVNAGHGLCYTTIEWMVTLKEIDEFSIGHSIVSRAALVGMDRAVRDMLALIS.

N7 contacts 3-amino-2-oxopropyl phosphate. 1-deoxy-D-xylulose 5-phosphate is bound at residue 9 to 10 (DH). R18 is a 3-amino-2-oxopropyl phosphate binding site. H43 (proton acceptor) is an active-site residue. 1-deoxy-D-xylulose 5-phosphate is bound by residues R45 and H50. Residue E69 is the Proton acceptor of the active site. T99 lines the 1-deoxy-D-xylulose 5-phosphate pocket. H190 (proton donor) is an active-site residue. Residues G191 and 212 to 213 (GH) contribute to the 3-amino-2-oxopropyl phosphate site.

This sequence belongs to the PNP synthase family. In terms of assembly, homooctamer; tetramer of dimers.

It is found in the cytoplasm. The enzyme catalyses 3-amino-2-oxopropyl phosphate + 1-deoxy-D-xylulose 5-phosphate = pyridoxine 5'-phosphate + phosphate + 2 H2O + H(+). Its pathway is cofactor biosynthesis; pyridoxine 5'-phosphate biosynthesis; pyridoxine 5'-phosphate from D-erythrose 4-phosphate: step 5/5. Functionally, catalyzes the complicated ring closure reaction between the two acyclic compounds 1-deoxy-D-xylulose-5-phosphate (DXP) and 3-amino-2-oxopropyl phosphate (1-amino-acetone-3-phosphate or AAP) to form pyridoxine 5'-phosphate (PNP) and inorganic phosphate. In Desulfosudis oleivorans (strain DSM 6200 / JCM 39069 / Hxd3) (Desulfococcus oleovorans), this protein is Pyridoxine 5'-phosphate synthase.